Reading from the N-terminus, the 144-residue chain is Prefoldin subunit alpha (144 aa).

The protein belongs to the prefoldin alpha subunit family. As to quaternary structure, heterohexamer of two alpha and four beta subunits.

The protein resides in the cytoplasm. Functionally, molecular chaperone capable of stabilizing a range of proteins. Seems to fulfill an ATP-independent, HSP70-like function in archaeal de novo protein folding. This Metallosphaera sedula (strain ATCC 51363 / DSM 5348 / JCM 9185 / NBRC 15509 / TH2) protein is Prefoldin subunit alpha.